A 209-amino-acid chain; its full sequence is Pyridoxine/pyridoxamine 5'-phosphate oxidase (209 aa).

Substrate-binding positions include 7–10 and Lys-64; that span reads REDY. Residues 59-64, 74-75, Arg-80, and Lys-81 each bind FMN; these read RIVLLK and FT. 3 residues coordinate substrate: Tyr-121, Arg-125, and Ser-129. FMN is bound by residues 138–139 and Trp-182; that span reads QS. 188–190 is a substrate binding site; that stretch reads RLH. Arg-192 contributes to the FMN binding site.

This sequence belongs to the pyridoxamine 5'-phosphate oxidase family. Homodimer. Requires FMN as cofactor.

It carries out the reaction pyridoxamine 5'-phosphate + O2 + H2O = pyridoxal 5'-phosphate + H2O2 + NH4(+). It catalyses the reaction pyridoxine 5'-phosphate + O2 = pyridoxal 5'-phosphate + H2O2. The protein operates within cofactor metabolism; pyridoxal 5'-phosphate salvage; pyridoxal 5'-phosphate from pyridoxamine 5'-phosphate: step 1/1. Its pathway is cofactor metabolism; pyridoxal 5'-phosphate salvage; pyridoxal 5'-phosphate from pyridoxine 5'-phosphate: step 1/1. Its function is as follows. Catalyzes the oxidation of either pyridoxine 5'-phosphate (PNP) or pyridoxamine 5'-phosphate (PMP) into pyridoxal 5'-phosphate (PLP). The protein is Pyridoxine/pyridoxamine 5'-phosphate oxidase of Actinobacillus pleuropneumoniae serotype 7 (strain AP76).